The chain runs to 140 residues: MKAFIVLVALACAAPAFGRTMDRCSLAREMSNLGVPRDQLARWACIAEHESSYRTGVVGPENYNGSNDYGIFQINDYYWCAPPSGRFSYNECGLSCNALLTDDITHSVRCAQKVLSQQGWSAWSTWHYCSGWLPSIDDCF.

The N-terminal stretch at 1–18 (MKAFIVLVALACAAPAFG) is a signal peptide. The C-type lysozyme domain maps to 19–140 (RTMDRCSLAR…GWLPSIDDCF (122 aa)). 4 cysteine pairs are disulfide-bonded: cysteine 24-cysteine 139, cysteine 45-cysteine 129, cysteine 80-cysteine 96, and cysteine 92-cysteine 110. Catalysis depends on residues glutamate 50 and aspartate 68.

The protein belongs to the glycosyl hydrolase 22 family. In terms of tissue distribution, found in the midgut.

It catalyses the reaction Hydrolysis of (1-&gt;4)-beta-linkages between N-acetylmuramic acid and N-acetyl-D-glucosamine residues in a peptidoglycan and between N-acetyl-D-glucosamine residues in chitodextrins.. Its function is as follows. Unlikely to play an active role in the humoral immune defense. May have a function in the digestion of bacteria in the food. In Drosophila melanogaster (Fruit fly), this protein is Lysozyme D (LysD).